The following is a 558-amino-acid chain: Transcription termination factor MTEF18, mitochondrial (558 aa).

A mitochondrion-targeting transit peptide spans 1-58 (MFMVRLKFASISHNFSTVAAKHRRVPSKYKSLAIGKAQQAITDYLHTTRSLSYTHAEQ).

It belongs to the mTERF family.

It localises to the mitochondrion. Transcription termination factor involved in the regulation of mitochondrial-encoded gene expression. Essential for normal plant growth and development. The sequence is that of Transcription termination factor MTEF18, mitochondrial from Arabidopsis thaliana (Mouse-ear cress).